A 145-amino-acid polypeptide reads, in one-letter code: Leghemoglobin-1 (145 aa).

A Globin domain is found at 3–145 (AFSDKQEALV…ELAAAIKKAY (143 aa)). Nitrated tyrosine is present on residues tyrosine 26 and tyrosine 31. Serine 46 is a binding site for heme b. Serine 46 bears the Phosphoserine mark. Histidine 62 serves as a coordination point for O2. Residues lysine 65, histidine 93, and lysine 96 each coordinate heme b. Nitrated tyrosine is present on tyrosine 134.

It belongs to the plant globin family. Monomer. Nitrated in effective nodules and particularly in hypoxic conditions; this mechanism may play a protective role in the symbiosis by buffering toxic peroxynitrite NO(2)(-). Nitration level decrease during nodule senescence. In terms of processing, phosphorylation at Ser-46 disrupts the molecular environment of its porphyrin ring oxygen binding pocket, thus leading to a reduced oxygen consumption and to the delivery of oxygen O(2) to symbiosomes. In terms of tissue distribution, root nodules.

It localises to the cytoplasm. The protein resides in the cytosol. The protein localises to the nucleus. Leghemoglobin that reversibly binds oxygen O(2) through a pentacoordinated heme iron. In root nodules, facilitates the diffusion of oxygen to the bacteroids while preventing the bacterial nitrogenase from being inactivated by buffering dioxygen, nitric oxide and carbon monoxide, and promoting the formation of reactive oxygen species (ROS, e.g. H(2)O(2)). This role is essential for symbiotic nitrogen fixation (SNF). In Vigna unguiculata (Cowpea), this protein is Leghemoglobin-1.